Consider the following 799-residue polypeptide: MLYSTSDKSLVHCSVPQQIFYRAEECMGDEIVGSLLCKENILLCTPRKYIFPHLVLRALNMDETMGFQKRENPSKRAEILVVTNRLEMLAFLETCRVNAERLFQICSNIHQYIGYCNMGDTYFARVYWRHILYHYYEGKLPQDVPLHYIYPVASGYRKFNALSRGNRNILGRKDSQNPTIYVTENLDMLNEQEHSFDYIFVDCSYIKKGLSNLPKSTLLFFDNLLDDRIPYLQKSAVKNYIVDGDCIQNIDENEIQQPMINIEELLHKVSIHSLDVEYVKSSFEQEIERLIHLLDKLRKGKFSRYDTNVAAKLVYILIRLPIGAGLYDLIASMQPYWDTVLGLLQELKDSESRYENDSFEEMVSLFEDILYKHSLDRSNPKGDELKAFILNEVKQGKSVCVVSNSRKNQLALKEFISLAMGMTIEELAEYDLQFFVSKDIWAQDITVHCDSLVMYSAINFRDLQSLLKISYKRAKLYLYSSEINLITQKLKTILEAENYALRHFVQNSTQQDSTNFYRYLYNRFNKFARQKVIGLNSAAADLLEKSTTVSPAVYRGEKDYKGTDAVKATLVHFTDGSVSFFTKNSAVYVLDNKNKRVTHKHFHEIGLKDTILFVDNDARKDLYRIFIQSVDAKDTSKQAYLSIKKWRELYEEKFMEKRMDDDRLFRLMRTAGWNKTTKSVLRNWRTGYSYGPRDREDIMVLGEVLGINTFVEDVQTYYNAMSKIRVERRKASRILNKLIYSSKQVLGNEDSAILARYNLTLEQLNESLVTKSIKEIVSDRMYYIKPAEVGLLYNVDAKE.

It is found in the cytoplasm. Functionally, component of antiviral defense system DISARM (defense island system associated with restriction-modification), composed of DrmE, DrmA, DrmB, DrmC and DrmMII. DISARM is probably a multi-gene restriction module, this subunit has an unknown function. Expression of DISARM in B.subtilis (strain BEST7003) confers resistance to phages Nf, phi29, phi105, phi3T, SPO1, SPR and SPP1. Protection is over 10(7)-fold against phi3T, 10(4)-10(5)-fold against Nf, phi29, phi105 and SPR, 100-fold against SPO1 and 10-fold against SPP1. DISARM does not interfere with phage adsorption, but instead interferes with (phi3T) DNA replication early in its cycle, preventing replication, circularization and lysogeny and probably causes phage DNA degradation (DNA is degraded in SPP1-infected cells). The chain is DISARM protein DrmE from Bacillus paralicheniformis (strain ATCC 9945a / NCIMB 11709 / CD-2).